A 156-amino-acid polypeptide reads, in one-letter code: Large ribosomal subunit protein uL15 (156 aa).

A disordered region spans residues 1–44; the sequence is MKLNELRDNPGASPKRTRVGRGPGSGKGKMGGRGIKGQKSRSGV. A compositionally biased stretch (gly residues) spans 21-35; it reads RGPGSGKGKMGGRGI.

This sequence belongs to the universal ribosomal protein uL15 family. As to quaternary structure, part of the 50S ribosomal subunit.

In terms of biological role, binds to the 23S rRNA. This chain is Large ribosomal subunit protein uL15, found in Ruegeria sp. (strain TM1040) (Silicibacter sp.).